Reading from the N-terminus, the 379-residue chain is MSELSFDAPVWRHGKALRKGYTTGSCATAAAKVAALMVLRQHLIHQVSIVTPSGVTLCLNVESPHIEGQQAIAAIRKDGGDDVDATHGMLIFARVTLNDSGEITLTGGEGIGTVTRKGVGLPLGSAAINRTPRHTIESAVREAIGPARGADVEIFAPEGEVRAQKTYNSRLGILGGISIIGTTGIVTPMSEESWKRSLSLELEIKRASGLTRVILVPGNHGERFVREQMGVDTQAVVTMSNFVGYMIEEAVRLGFCQIVLVGHPGKLIKIAAGIFHTHSHIADARMETLVAHLALLGAPLELLTLVGDCDTTEAAMEHIEAYGFGHIYNHLARRICLRVMQMRRFTKTPPVCDAILFSFDNHILGSNRPVDEIAKELQC.

It belongs to the CbiD family.

The catalysed reaction is Co-precorrin-5B + S-adenosyl-L-methionine = Co-precorrin-6A + S-adenosyl-L-homocysteine. It functions in the pathway cofactor biosynthesis; adenosylcobalamin biosynthesis; cob(II)yrinate a,c-diamide from sirohydrochlorin (anaerobic route): step 6/10. Functionally, catalyzes the methylation of C-1 in cobalt-precorrin-5B to form cobalt-precorrin-6A. In Salmonella paratyphi A (strain ATCC 9150 / SARB42), this protein is Cobalt-precorrin-5B C(1)-methyltransferase.